Here is a 238-residue protein sequence, read N- to C-terminus: Ribonuclease PH (238 aa).

Residues Arg86 and 124–126 contribute to the phosphate site; that span reads GTR.

This sequence belongs to the RNase PH family. As to quaternary structure, homohexameric ring arranged as a trimer of dimers.

The catalysed reaction is tRNA(n+1) + phosphate = tRNA(n) + a ribonucleoside 5'-diphosphate. In terms of biological role, phosphorolytic 3'-5' exoribonuclease that plays an important role in tRNA 3'-end maturation. Removes nucleotide residues following the 3'-CCA terminus of tRNAs; can also add nucleotides to the ends of RNA molecules by using nucleoside diphosphates as substrates, but this may not be physiologically important. Probably plays a role in initiation of 16S rRNA degradation (leading to ribosome degradation) during starvation. The chain is Ribonuclease PH from Histophilus somni (strain 2336) (Haemophilus somnus).